The sequence spans 123 residues: Immunoglobulin lambda variable 5-37 (123 aa).

The N-terminal stretch at 1-19 (MAWTPLLLLLLSHCTGSLS) is a signal peptide. Positions 20–44 (QPVLTQPPSSSASPGESARLTCTLP) are framework-1. Residues 21–123 (PVLTQPPSSS…YCMIWPSNAS (103 aa)) enclose the Ig-like domain. C41 and C115 form a disulfide bridge. Positions 45–53 (SDINVGSYN) are complementarity-determining-1. The segment at 54-70 (IYWYQQKPGSPPRYLLY) is framework-2. The interval 71-77 (YYSDSDK) is complementarity-determining-2. The framework-3 stretch occupies residues 78 to 115 (GQGSGVPSRFSGSKDASANTGILLISGLQSEDEADYYC). The interval 116–123 (MIWPSNAS) is complementarity-determining-3.

As to quaternary structure, immunoglobulins are composed of two identical heavy chains and two identical light chains; disulfide-linked.

The protein localises to the secreted. It localises to the cell membrane. In terms of biological role, v region of the variable domain of immunoglobulin light chains that participates in the antigen recognition. Immunoglobulins, also known as antibodies, are membrane-bound or secreted glycoproteins produced by B lymphocytes. In the recognition phase of humoral immunity, the membrane-bound immunoglobulins serve as receptors which, upon binding of a specific antigen, trigger the clonal expansion and differentiation of B lymphocytes into immunoglobulins-secreting plasma cells. Secreted immunoglobulins mediate the effector phase of humoral immunity, which results in the elimination of bound antigens. The antigen binding site is formed by the variable domain of one heavy chain, together with that of its associated light chain. Thus, each immunoglobulin has two antigen binding sites with remarkable affinity for a particular antigen. The variable domains are assembled by a process called V-(D)-J rearrangement and can then be subjected to somatic hypermutations which, after exposure to antigen and selection, allow affinity maturation for a particular antigen. The protein is Immunoglobulin lambda variable 5-37 of Homo sapiens (Human).